The following is a 1555-amino-acid chain: Glycogen debranching enzyme (1555 aa).

Phosphoserine is present on serine 87. Residues aspartate 549, histidine 552, and aspartate 650 contribute to the active site.

The protein belongs to the glycogen debranching enzyme family. As to quaternary structure, monomer. Interacts with NHLRC1/malin. The N-terminus is blocked. In terms of processing, ubiquitinated.

The protein localises to the cytoplasm. It catalyses the reaction Transfers a segment of a (1-&gt;4)-alpha-D-glucan to a new position in an acceptor, which may be glucose or a (1-&gt;4)-alpha-D-glucan.. The enzyme catalyses Hydrolysis of (1-&gt;6)-alpha-D-glucosidic branch linkages in glycogen phosphorylase limit dextrin.. In terms of biological role, multifunctional enzyme acting as 1,4-alpha-D-glucan:1,4-alpha-D-glucan 4-alpha-D-glycosyltransferase and amylo-1,6-glucosidase in glycogen degradation. The sequence is that of Glycogen debranching enzyme (AGL) from Oryctolagus cuniculus (Rabbit).